The sequence spans 163 residues: MAEEHRLQEPRLCANNCGFFGSTATQNLCSKCFRDLQHQEQNSSTAKHALTQSLAAVGAAASSSVSPPPPPPADSKEIVEAKSEKRAAAEPEEADGPPQDPKRCLTCRRRVGITGFRCRCGFVFCGTHRYAEQHECSFDFKRMGKDKIAKANPIVKADKLEKI.

The A20-type zinc finger occupies 7-41 (LQEPRLCANNCGFFGSTATQNLCSKCFRDLQHQEQ). Zn(2+) is bound by residues Cys13, Cys17, Cys29, and Cys32. A disordered region spans residues 57 to 101 (VGAAASSSVSPPPPPPADSKEIVEAKSEKRAAAEPEEADGPPQDP). The span at 74 to 89 (DSKEIVEAKSEKRAAA) shows a compositional bias: basic and acidic residues. The AN1-type zinc finger occupies 98–144 (PQDPKRCLTCRRRVGITGFRCRCGFVFCGTHRYAEQHECSFDFKRMG). Residues Cys104, Cys107, Cys118, Cys120, Cys125, His128, His134, and Cys136 each coordinate Zn(2+).

In terms of biological role, may be involved in environmental stress response. The chain is Zinc finger A20 and AN1 domain-containing stress-associated protein 3 (SAP3) from Arabidopsis thaliana (Mouse-ear cress).